We begin with the raw amino-acid sequence, 480 residues long: Proline--tRNA ligase (480 aa).

The protein belongs to the class-II aminoacyl-tRNA synthetase family. ProS type 3 subfamily. As to quaternary structure, homodimer.

It localises to the cytoplasm. The enzyme catalyses tRNA(Pro) + L-proline + ATP = L-prolyl-tRNA(Pro) + AMP + diphosphate. Its function is as follows. Catalyzes the attachment of proline to tRNA(Pro) in a two-step reaction: proline is first activated by ATP to form Pro-AMP and then transferred to the acceptor end of tRNA(Pro). The polypeptide is Proline--tRNA ligase (Pyrococcus horikoshii (strain ATCC 700860 / DSM 12428 / JCM 9974 / NBRC 100139 / OT-3)).